The following is a 681-amino-acid chain: Methionine--tRNA ligase (681 aa).

The short motif at 14 to 24 is the 'HIGH' region element; sequence PYANGSIHLGH. Zn(2+) contacts are provided by Cys-145, Cys-148, Cys-158, and Cys-161. Positions 331 to 335 match the 'KMSKS' region motif; it reads KMSKS. Lys-334 contacts ATP. The tRNA-binding domain maps to 579–681; the sequence is AFAAIDLRVA…SGAKPGQRIK (103 aa).

The protein belongs to the class-I aminoacyl-tRNA synthetase family. MetG type 1 subfamily. As to quaternary structure, homodimer. Zn(2+) is required as a cofactor.

The protein resides in the cytoplasm. The enzyme catalyses tRNA(Met) + L-methionine + ATP = L-methionyl-tRNA(Met) + AMP + diphosphate. Is required not only for elongation of protein synthesis but also for the initiation of all mRNA translation through initiator tRNA(fMet) aminoacylation. The polypeptide is Methionine--tRNA ligase (Pseudomonas fluorescens (strain ATCC BAA-477 / NRRL B-23932 / Pf-5)).